The following is a 193-amino-acid chain: Recombination protein RecR (193 aa).

Residues 61–76 (CASCNALSETEVSEIC) form a C4-type; degenerate zinc finger. In terms of domain architecture, Toprim spans 84–170 (SQLCMVLHPR…TFTKIAQGVP (87 aa)).

This sequence belongs to the RecR family.

May play a role in DNA repair. It seems to be involved in an RecBC-independent recombinational process of DNA repair. It may act with RecF and RecO. The protein is Recombination protein RecR of Helicobacter pylori (strain J99 / ATCC 700824) (Campylobacter pylori J99).